The sequence spans 360 residues: Mannose-1-phosphate guanylyltransferase catalytic subunit beta (360 aa).

Residues 2–222 are substrate-binding domain; it reads KALILVGGYG…QGFWMDIGQP (221 aa). Position 110 (Asp110) interacts with GDP-alpha-D-mannose. A Mg(2+)-binding site is contributed by Asp110. Lys162 is a catalytic residue. Position 218 (Asp218) interacts with GDP-alpha-D-mannose. A Mg(2+)-binding site is contributed by Asp218. Residues 245–360 are hexapeptide repeat domain; that stretch reads HVGPGFIGNV…ESVPEPRIIM (116 aa).

The protein belongs to the transferase hexapeptide repeat family. Component of the GMPPA-GMPPB mannose-1-phosphate guanylyltransferase complex composed of 4 gmppa subunits and 8 gmppb subunits; the complex is organized into three layers, a central layer made up of 2 gmppa dimers sandwiched between two layers each made up of 2 gmppb dimers. Catalytic activity of gmppb is reduced when part of the complex and binding of GDP-alpha-D-Mannose by gmppa induces allosteric feedback inhibition of gmppb. Requires Mg(2+) as cofactor.

It catalyses the reaction alpha-D-mannose 1-phosphate + GTP + H(+) = GDP-alpha-D-mannose + diphosphate. It functions in the pathway nucleotide-sugar biosynthesis; GDP-alpha-D-mannose biosynthesis; GDP-alpha-D-mannose from alpha-D-mannose 1-phosphate (GTP route): step 1/1. With respect to regulation, enzyme activity is reduced by incorporation into the GMPPA-GMPPB mannose-1-phosphate guanylyltransferase complex. Allosterically inhibited, when part of the GMPPA-GMPPB complex, by GDP-alpha-D-mannose binding to GMPPA. Its function is as follows. Catalytic subunit of the GMPPA-GMPPB mannose-1-phosphate guanylyltransferase complex. Catalyzes the formation of GDP-mannose, an essential precursor of glycan moieties of glycoproteins and glycolipids. Can catalyze the reverse reaction in vitro. Together with GMPPA regulates GDP-alpha-D-mannose levels. The chain is Mannose-1-phosphate guanylyltransferase catalytic subunit beta (gmppb) from Xenopus tropicalis (Western clawed frog).